A 179-amino-acid chain; its full sequence is Large ribosomal subunit protein uL5 (179 aa).

This sequence belongs to the universal ribosomal protein uL5 family. Part of the 50S ribosomal subunit; part of the 5S rRNA/L5/L18/L25 subcomplex. Contacts the 5S rRNA and the P site tRNA. Forms a bridge to the 30S subunit in the 70S ribosome.

This is one of the proteins that bind and probably mediate the attachment of the 5S RNA into the large ribosomal subunit, where it forms part of the central protuberance. In the 70S ribosome it contacts protein S13 of the 30S subunit (bridge B1b), connecting the 2 subunits; this bridge is implicated in subunit movement. Contacts the P site tRNA; the 5S rRNA and some of its associated proteins might help stabilize positioning of ribosome-bound tRNAs. In Synechococcus elongatus (strain ATCC 33912 / PCC 7942 / FACHB-805) (Anacystis nidulans R2), this protein is Large ribosomal subunit protein uL5.